A 430-amino-acid polypeptide reads, in one-letter code: Uric acid permease PucK (430 aa).

Helical transmembrane passes span 18–38 (MLAMYAGAILVPLIVGAAIGL), 43–63 (LTYLIAIDLFMCGAATLLQLW), 67–87 (YFGIGLPVVLGCTFTAVGPMI), 97–117 (AIYGAIIAAGLIVVLAAGFFG), 122–142 (FFPPVVTGSVVMIIGISLIPT), 163–183 (LLGFGVTAFILLLFYFFKGFI), 185–205 (SIAILLGLIAGTAAAYFMGKV), 209–229 (EVLEASWLHVPSLFYFGPPTF), 233–253 (AVVTMLLVAIVSLVESTGVYF), 274–294 (AEGLAILLGGLFNAFPYTAFS), 310–330 (VIAITGIILVAIGLVPKAAAL), 333–353 (VIPTPVLGGAMIVMFGMVISY), 369–389 (LLIIASSVSLGLGATTVPALF), and 398–418 (VLAGSGIVIGSLTAIALHAFF).

Belongs to the nucleobase:cation symporter-2 (NCS2) (TC 2.A.40) family.

Its subcellular location is the cell membrane. Functionally, uptake of uric acid. The sequence is that of Uric acid permease PucK (pucK) from Bacillus subtilis (strain 168).